The chain runs to 113 residues: Prefoldin subunit beta (113 aa).

This sequence belongs to the prefoldin subunit beta family. In terms of assembly, heterohexamer of two alpha and four beta subunits.

It localises to the cytoplasm. In terms of biological role, molecular chaperone capable of stabilizing a range of proteins. Seems to fulfill an ATP-independent, HSP70-like function in archaeal de novo protein folding. In Methanococcus maripaludis (strain C6 / ATCC BAA-1332), this protein is Prefoldin subunit beta.